A 309-amino-acid polypeptide reads, in one-letter code: Olfactory receptor 10V1 (309 aa).

The Extracellular segment spans residues 1–25; it reads MEGINKTAKMQFFFRPFSPDPEVQM. The N-linked (GlcNAc...) asparagine glycan is linked to asparagine 5. Residues 26–46 traverse the membrane as a helical segment; sequence LIFVVFLMMYLTSLGGNATIA. The Cytoplasmic portion of the chain corresponds to 47 to 54; sequence VIVQINHS. Residues 55 to 75 form a helical membrane-spanning segment; sequence LHTPMYFFLANLAVLEIFYTS. The Extracellular segment spans residues 76–100; sequence SITPLALANLLSMGKTPVSITGCGT. Cysteine 98 and cysteine 190 form a disulfide bridge. Residues 101-121 traverse the membrane as a helical segment; it reads QMFFFVFLGGADCVLLVVMAY. At 122 to 140 the chain is on the cytoplasmic side; it reads DQFIAICHPLRYRLIMSWS. The helical transmembrane segment at 141-161 threads the bilayer; the sequence is LCVELLVGSLVLGFLLSLPLT. Residues 162 to 198 are Extracellular-facing; the sequence is ILIFHLPFCHNDEIYHFYCDMPAVMRLACADTRVHKT. A helical membrane pass occupies residues 199-218; the sequence is ALYIISFIVLSIPLSLISIS. The Cytoplasmic portion of the chain corresponds to 219–238; it reads YVFIVVAILRIRSAEGRQQA. A helical membrane pass occupies residues 239-259; it reads YSTCSSHILVVLLQYGCTSFI. Residues 260–272 are Extracellular-facing; that stretch reads YLSPSSSYSPEMG. Residues 273–293 traverse the membrane as a helical segment; the sequence is RVVSVAYTFITPILNPLIYSL. Over 294–309 the chain is Cytoplasmic; the sequence is RNKELKDALRKALRKF.

It belongs to the G-protein coupled receptor 1 family.

The protein localises to the cell membrane. In terms of biological role, odorant receptor. The protein is Olfactory receptor 10V1 (OR10V1) of Homo sapiens (Human).